We begin with the raw amino-acid sequence, 239 residues long: Protein GUCD1 (239 aa).

The chain is Protein GUCD1 (Gucd1) from Mus musculus (Mouse).